Here is a 420-residue protein sequence, read N- to C-terminus: Protein-lysine N-trimethyltransferase SMYD5 (420 aa).

One can recognise an SET domain in the interval 29 to 358 (AEARFISSAK…AGEEICISYL (330 aa)). The MYND-type zinc-finger motif lies at 104–142 (PEQCSIRKDLHQQCPRCQVTYCSAECRQAALEQYHQVLC). Residue Tyr-357 coordinates S-adenosyl-L-methionine. The disordered stretch occupies residues 392 to 420 (DDPDVTSDEEEEAEGETDDAELEDEMTDV).

This sequence belongs to the class V-like SAM-binding methyltransferase superfamily.

It localises to the cytoplasm. The catalysed reaction is L-lysyl-[protein] + 3 S-adenosyl-L-methionine = N(6),N(6),N(6)-trimethyl-L-lysyl-[protein] + 3 S-adenosyl-L-homocysteine + 3 H(+). It catalyses the reaction L-lysyl(20)-[histone H4] + 3 S-adenosyl-L-methionine = N(6),N(6),N(6)-trimethyl-L-lysyl(20)-[histone H4] + 3 S-adenosyl-L-homocysteine + 3 H(+). The enzyme catalyses L-lysyl(36)-[histone H3] + 3 S-adenosyl-L-methionine = N(6),N(6),N(6)-trimethyl-L-lysyl(36)-[histone H3] + 3 S-adenosyl-L-homocysteine + 3 H(+). Protein-lysine N-trimethyltransferase that specifically catalyzes trimethylation of 'Lys-22' of the RPL40/eL40 subunit of the 60S ribosome, thereby promoting translation elongation and protein synthesis. May also act as a histone methyltransferase in the context of histone octamers, but not on nucleosome substrates: trimethylates 'Lys-36' of histone H3 and 'Lys-20' of histone H4 to form H3K36me3 and H4K20me3, respectively. The histone methyltransferase activity, which is independent of its SET domain, is however unsure in vivo. The chain is Protein-lysine N-trimethyltransferase SMYD5 (SMYD5) from Gallus gallus (Chicken).